Reading from the N-terminus, the 291-residue chain is Shikimate dehydrogenase (NADP(+)) (291 aa).

Shikimate contacts are provided by residues 26-28 and Ser-73; that span reads SLS. Lys-77 functions as the Proton acceptor in the catalytic mechanism. Positions 98 and 113 each coordinate shikimate. Residues 137 to 141 and Val-238 each bind NADP(+); that span reads GAGGA. Tyr-240 lines the shikimate pocket. Gly-261 serves as a coordination point for NADP(+).

It belongs to the shikimate dehydrogenase family. In terms of assembly, homodimer.

It catalyses the reaction shikimate + NADP(+) = 3-dehydroshikimate + NADPH + H(+). The protein operates within metabolic intermediate biosynthesis; chorismate biosynthesis; chorismate from D-erythrose 4-phosphate and phosphoenolpyruvate: step 4/7. Functionally, involved in the biosynthesis of the chorismate, which leads to the biosynthesis of aromatic amino acids. Catalyzes the reversible NADPH linked reduction of 3-dehydroshikimate (DHSA) to yield shikimate (SA). In Listeria monocytogenes serotype 4b (strain F2365), this protein is Shikimate dehydrogenase (NADP(+)).